The chain runs to 46 residues: uncharacterized protein (46 aa).

The interval 1-46 (MEVTPLETGRARSHQKASTAAQPHAADEKMTGSTARRYLSQDHQSV) is disordered.

This is an uncharacterized protein from Treponema pallidum (strain Nichols).